A 61-amino-acid polypeptide reads, in one-letter code: Small ribosomal subunit protein uS14 (61 aa).

Zn(2+) is bound by residues Cys24, Cys27, Cys40, and Cys43.

It belongs to the universal ribosomal protein uS14 family. Zinc-binding uS14 subfamily. As to quaternary structure, part of the 30S ribosomal subunit. Contacts proteins S3 and S10. The cofactor is Zn(2+).

Functionally, binds 16S rRNA, required for the assembly of 30S particles and may also be responsible for determining the conformation of the 16S rRNA at the A site. The protein is Small ribosomal subunit protein uS14 of Dehalococcoides mccartyi (strain ATCC BAA-2266 / KCTC 15142 / 195) (Dehalococcoides ethenogenes (strain 195)).